A 272-amino-acid chain; its full sequence is Endoplasmic reticulum resident protein 27 (272 aa).

The signal sequence occupies residues 1 to 25; that stretch reads MEAMPSRCLFLLFLSTCKLSPEVVA. One can recognise a Thioredoxin domain in the interval 38 to 151; sequence EPMRLTDVQA…LVTEYNAITA (114 aa). Asn99 is a glycosylation site (N-linked (GlcNAc...) asparagine). The segment at 229-232 is PDIA3-binding site; that stretch reads DKWD. Residues 269-272 carry the Prevents secretion from ER motif; sequence KVEL.

The protein belongs to the protein disulfide isomerase family. Interacts with PDIA3.

It is found in the endoplasmic reticulum lumen. Specifically binds unfolded proteins and may recruit protein disulfide isomerase PDIA3 to unfolded substrates. Binds protein substrates via a hydrophobic pocket in the C-terminal domain. May play a role in the unfolded stress response. This chain is Endoplasmic reticulum resident protein 27 (ERP27), found in Bos taurus (Bovine).